We begin with the raw amino-acid sequence, 501 residues long: Glycerol kinase (501 aa).

Residue Thr17 participates in ADP binding. Residues Thr17, Thr18, and Ser19 each contribute to the ATP site. Thr17 provides a ligand contact to sn-glycerol 3-phosphate. Arg21 contributes to the ADP binding site. 4 residues coordinate sn-glycerol 3-phosphate: Arg87, Glu88, Tyr139, and Asp243. Residues Arg87, Glu88, Tyr139, Asp243, and Gln244 each contribute to the glycerol site. 2 residues coordinate ADP: Thr265 and Gly308. Thr265, Gly308, Gln312, and Gly409 together coordinate ATP. 2 residues coordinate ADP: Gly409 and Asn413.

Belongs to the FGGY kinase family.

The catalysed reaction is glycerol + ATP = sn-glycerol 3-phosphate + ADP + H(+). It functions in the pathway polyol metabolism; glycerol degradation via glycerol kinase pathway; sn-glycerol 3-phosphate from glycerol: step 1/1. Inhibited by fructose 1,6-bisphosphate (FBP). In terms of biological role, key enzyme in the regulation of glycerol uptake and metabolism. Catalyzes the phosphorylation of glycerol to yield sn-glycerol 3-phosphate. The protein is Glycerol kinase of Pseudomonas fluorescens (strain ATCC BAA-477 / NRRL B-23932 / Pf-5).